Here is a 219-residue protein sequence, read N- to C-terminus: Ribosomal RNA small subunit methyltransferase G (219 aa).

S-adenosyl-L-methionine contacts are provided by residues glycine 85, leucine 90, 136-137, and arginine 151; that span reads VE.

The protein belongs to the methyltransferase superfamily. RNA methyltransferase RsmG family.

It is found in the cytoplasm. It carries out the reaction guanosine(527) in 16S rRNA + S-adenosyl-L-methionine = N(7)-methylguanosine(527) in 16S rRNA + S-adenosyl-L-homocysteine. Specifically methylates the N7 position of guanine in position 527 of 16S rRNA. This chain is Ribosomal RNA small subunit methyltransferase G, found in Cellvibrio japonicus (strain Ueda107) (Pseudomonas fluorescens subsp. cellulosa).